The following is a 147-amino-acid chain: D-aminoacyl-tRNA deacylase (147 aa).

The Gly-cisPro motif, important for rejection of L-amino acids signature appears at Gly-136–Pro-137.

Belongs to the DTD family. Homodimer.

It is found in the cytoplasm. It carries out the reaction glycyl-tRNA(Ala) + H2O = tRNA(Ala) + glycine + H(+). The catalysed reaction is a D-aminoacyl-tRNA + H2O = a tRNA + a D-alpha-amino acid + H(+). Its function is as follows. An aminoacyl-tRNA editing enzyme that deacylates mischarged D-aminoacyl-tRNAs. Also deacylates mischarged glycyl-tRNA(Ala), protecting cells against glycine mischarging by AlaRS. Acts via tRNA-based rather than protein-based catalysis; rejects L-amino acids rather than detecting D-amino acids in the active site. By recycling D-aminoacyl-tRNA to D-amino acids and free tRNA molecules, this enzyme counteracts the toxicity associated with the formation of D-aminoacyl-tRNA entities in vivo and helps enforce protein L-homochirality. In Streptococcus thermophilus (strain CNRZ 1066), this protein is D-aminoacyl-tRNA deacylase.